The primary structure comprises 312 residues: Olfactory receptor 6Z7 (312 aa).

Residues 1–29 lie on the Extracellular side of the membrane; it reads MERSLALANMTRVQQFILLGLSTRLDIRD. Asn-9 is a glycosylation site (N-linked (GlcNAc...) asparagine). Residues 30–50 traverse the membrane as a helical segment; it reads ALFAVFLTLYLLTLLENTLII. Topologically, residues 51–69 are cytoplasmic; the sequence is YLICSHKELHKPMYFFLGN. The helical transmembrane segment at 70 to 90 threads the bilayer; it reads LSCLEMCYVSVTMPTLLMGLW. Residue Asn-91 is a topological domain, extracellular. The helical transmembrane segment at 92–112 threads the bilayer; the sequence is GLYHIPFIACMTQLFFFIVLV. A disulfide bridge links Cys-101 with Cys-193. The Cytoplasmic segment spans residues 113 to 141; sequence GTECILLASMAYDRYVAICRPLHYPVLMR. The helical transmembrane segment at 142-162 threads the bilayer; that stretch reads PQVCLGLAMISWLGGLLVSMI. Over 163–195 the chain is Extracellular; sequence KTTCIATLSYCGPNVLNHFFCDVSPLLNLSCTH. Asn-190 carries an N-linked (GlcNAc...) asparagine glycan. The chain crosses the membrane as a helical span at residues 196–216; sequence VALTELVDFISAIVILWGCFL. Over 217 to 241 the chain is Cytoplasmic; the sequence is TTMASYVAIGRAVLRMPSTTARYKA. The helical transmembrane segment at 242–262 threads the bilayer; it reads FSTCASHLVVVGIFYSVTIFI. The Extracellular portion of the chain corresponds to 263–275; that stretch reads YARPKRIEAMDLN. The chain crosses the membrane as a helical span at residues 276–296; it reads KVLSVIYTVVTPMCNPVIYCL. At 297-312 the chain is on the cytoplasmic side; it reads RNKEVQVALHRTMHWS.

The protein belongs to the G-protein coupled receptor 1 family.

It is found in the cell membrane. Its function is as follows. Odorant receptor. In Mus musculus (Mouse), this protein is Olfactory receptor 6Z7.